We begin with the raw amino-acid sequence, 205 residues long: DUF724 domain-containing protein 4 (205 aa).

The segment at 28 to 59 (DASGRGKRRRVEQEHHSDLNNETAAPTGGSAG) is disordered. The DUF724 domain occupies 63–189 (VLPFTKTLAS…MADDYSKLKK (127 aa)).

As to expression, expressed in roots, leaves, stems, flowers and siliques.

It is found in the nucleus. May be involved in the polar growth of plant cells via transportation of RNAs. The sequence is that of DUF724 domain-containing protein 4 from Arabidopsis thaliana (Mouse-ear cress).